Here is a 165-residue protein sequence, read N- to C-terminus: CDP-archaeol synthase (165 aa).

4 helical membrane passes run 41–61 (GLIC…WLVG), 72–92 (ILSV…KSFI), 103–123 (AWPV…TIIF), and 127–147 (WFFA…TPVL).

It belongs to the CDP-archaeol synthase family. Requires Mg(2+) as cofactor.

The protein localises to the cell membrane. The enzyme catalyses 2,3-bis-O-(geranylgeranyl)-sn-glycerol 1-phosphate + CTP + H(+) = CDP-2,3-bis-O-(geranylgeranyl)-sn-glycerol + diphosphate. The protein operates within membrane lipid metabolism; glycerophospholipid metabolism. Its function is as follows. Catalyzes the formation of CDP-2,3-bis-(O-geranylgeranyl)-sn-glycerol (CDP-archaeol) from 2,3-bis-(O-geranylgeranyl)-sn-glycerol 1-phosphate (DGGGP) and CTP. This reaction is the third ether-bond-formation step in the biosynthesis of archaeal membrane lipids. This chain is CDP-archaeol synthase, found in Methanoregula boonei (strain DSM 21154 / JCM 14090 / 6A8).